Reading from the N-terminus, the 99-residue chain is Indole-3-acetic acid-induced protein ARG2 (99 aa).

Positions Arg40–Glu62 are disordered. The segment covering Ser53 to Glu62 has biased composition (basic and acidic residues).

In Vigna radiata var. radiata (Mung bean), this protein is Indole-3-acetic acid-induced protein ARG2 (ARG2).